The primary structure comprises 202 residues: Recoverin (202 aa).

Gly-2 carries N-myristoyl glycine lipidation. 4 EF-hand domains span residues 24-59 (TEEE…FFPE), 61-96 (DPKA…TSAG), 97-132 (KTNQ…IFKM), and 147-182 (TPEK…NKEI). The residue at position 39 (Cys-39) is a Cysteine sulfenic acid (-SOH). Ca(2+) is bound by residues Asp-74, Asn-76, Asp-78, Thr-80, Glu-85, Asp-110, Asp-112, Asn-114, Thr-116, and Glu-121. Positions 189–192 (EPQK) are interaction with GRK1. A modulates EF-hand 3 domain calcium binding affinity region spans residues 191–202 (QKVKEKLKEKKL).

The protein belongs to the recoverin family. Homodimer; disulfide-linked. Homodimerization is caused by prolonged intense illumination. May form a complex composed of RHO, GRK1 and RCVRN in a Ca(2+)-dependent manner; RCVRN prevents the interaction between GRK1 and RHO. Interacts (via C-terminus) with GRK1 (via N-terminus); the interaction is Ca(2+)-dependent. The N-terminal glycine is linked to one of four different types of acyl groups. The most abundant is myristoleate (14:1), but 14:0, 14:2, and 12:0 acyl residues are also present. The Ca(2+) induced exposure of the myristoyl group, known as the calcium-myristoyl switch, promotes RCVRN binding to the photoreceptor cell membranes only when intracellular Ca(2+) concentration is high. Post-translationally, oxidation on Cys-39 occurs in response to prolonged intense illumination and results in the formation of disulfide homodimers, and to a lesser extent disulfide-linked heterodimers. As to expression, expressed in the retina (at protein level). Expressed in the pineal gland (at protein level).

Its subcellular location is the photoreceptor inner segment. The protein resides in the cell projection. It localises to the cilium. It is found in the photoreceptor outer segment. The protein localises to the photoreceptor outer segment membrane. Its subcellular location is the perikaryon. Its function is as follows. Acts as a calcium sensor and regulates phototransduction of cone and rod photoreceptor cells. Modulates light sensitivity of cone photoreceptor in dark and dim conditions. In response to high Ca(2+) levels induced by low light levels, prolongs RHO/rhodopsin activation in rod photoreceptor cells by binding to and inhibiting GRK1-mediated phosphorylation of RHO/rhodopsin. Plays a role in scotopic vision/enhances vision in dim light by enhancing signal transfer between rod photoreceptors and rod bipolar cells. Improves rod photoreceptor sensitivity in dim light and mediates response of rod photoreceptors to facilitate detection of change and motion in bright light. The polypeptide is Recoverin (RCVRN) (Bos taurus (Bovine)).